We begin with the raw amino-acid sequence, 194 residues long: Fibroblast growth factor 7 (194 aa).

The signal sequence occupies residues 1–31; it reads MRKWILTWILPTLLYRSCFHIICLVGTISLA. An N-linked (GlcNAc...) asparagine glycan is attached at N45.

This sequence belongs to the heparin-binding growth factors family. As to quaternary structure, interacts with FGFBP1. Interacts with FGFR2. Affinity between fibroblast growth factors (FGFs) and their receptors is increased by heparan sulfate glycosaminoglycans that function as coreceptors.

The protein resides in the secreted. Its function is as follows. Plays an important role in the regulation of embryonic development, cell proliferation and cell differentiation. Required for normal branching morphogenesis. Growth factor active on keratinocytes. Possible major paracrine effector of normal epithelial cell proliferation. This is Fibroblast growth factor 7 (FGF7) from Canis lupus familiaris (Dog).